A 796-amino-acid chain; its full sequence is Nuclear GTPase SLIP-GC (796 aa).

The span at 1–22 shows a compositional bias: basic and acidic residues; sequence MAETKDVFGQEPHPVEDDLYKE. A disordered region spans residues 1-35; it reads MAETKDVFGQEPHPVEDDLYKERTRKRRKSDRDQR. 107–114 contributes to the GTP binding site; it reads GSTGAGKS. 2 coiled-coil regions span residues 158-185 and 745-775; these read SDQE…EEAD and KELA…RLRK.

Expressed in germinal center B-cell and in lymphomas derived from germinal center B-cell.

The protein resides in the nucleus speckle. Its function is as follows. Nuclear GTPase found in germinal center B-cells, where it may inhibit function of the activation-induced cytidine deaminase AICDA. Reduces somatic hypermutation in B-cells which may enhance genome stability. In Homo sapiens (Human), this protein is Nuclear GTPase SLIP-GC (NUGGC).